Reading from the N-terminus, the 415-residue chain is Leucine-rich repeat-containing protein 34 (415 aa).

2 LRR repeats span residues 246–272 and 274–296; these read SLRYLDVSCNKITRDGMVFLADVLKSN and TLEVLDLSFNRIETAGAKYLSET.

Interacts with NPM1 and NCL. In terms of tissue distribution, expressed in testis where it specifically localizes to germ cells (at protein level). Not detected in other tissues tested (at protein level). Expressed in pluripotent embryonic stem cells and multipotent adult germline stem cells.

It is found in the nucleus. The protein resides in the nucleolus. Its subcellular location is the cytoplasm. Its function is as follows. Highly expressed in stem cells where it may be involved in regulation of pluripotency. In embryonic stem cells (ESCs), important for normal expression of the pluripotency regulators POU5F1/OCT4 and KLF4. Also important for expression of the ectodermal marker gene NES and the endodermal marker gene GATA4. Promotes stem cell proliferation in vitro. The protein is Leucine-rich repeat-containing protein 34 of Mus musculus (Mouse).